We begin with the raw amino-acid sequence, 881 residues long: MSTVEPLSDEGVAAGPRRIEVPRPPSIEEFTIVKPISRGAFGKVYLGRKAGRLYAVKVMKKADMINKNMVHQVQAERDALALSKSPFIVHLYYSLQSANNVYLVMEYLIGGDVKSLLHIYGYFDEEMAVKYISEAALALDYLHRHGIIHRDLKPDNMLISNQGHIKLTDFGLSRVTLNREINMIDILTTPSMAKPKHDYSRTPGQLLSLISSLGFYTPVGMKMPINPNSGGASDSLHEVISPLSMIEKENTPLSTKLFKTGLDTSPLTPVMPVRSLTPALLQSRERFGASTASSQSCMYLSSMESECCSSPRLEKDVKQTEDEMCSTGTSNSRPPLPSSREVLNSKDPKVLKKELESAISPISSNDCGSRQKLGTERSEITDTPVTTLDTKGIVRKCLSENKIWEEKLVARREMTNEMLETASSQQSPLFLKDPVQPVKEEEIFEKPGVKRSFELVDTSPCQELNYVKKTNAEYKRGCWISELSASKSTGLTTEIQSLMLSGEICESKEIMRCIDRQQTEKPLVPTVAKNLLCDLDADHEKDKEYMNSSLLCADDEKPLGALSADSDLSFPETSVSESHLEKQLVDLDKGVKDLSFEEPKAEDLLTMSPNCQEASRNGVEADVVQNCTMLCCEQDNHQKHTEETDTISSPSEKMTETVHLFRKNNVVFRSYNSPINVSNVSDPCSMASLDIMDLSPACSGSYPTAITPLQKTPRQGDAGTPYRTPKSVRRGAAPVEGERILGTPDYLAPELLLTKPHGSAVDWWALGVCLFEFLTGIPPFNDETPAQVFQNILKRDIPWPEGEEKLSDNAQNAIDILLTFDSTKRAGLKELKHHPLFHGVDWDNLQNQPMPFIPQPDDETDTSYFEARNNAQHLTVSGFSL.

Positions 1–20 (MSTVEPLSDEGVAAGPRRIE) are disordered. One can recognise a Protein kinase domain in the interval 30–837 (FTIVKPISRG…LKELKHHPLF (808 aa)). Residues 36-44 (ISRGAFGKV) and Lys-57 each bind ATP. Asp-151 serves as the catalytic Proton acceptor. Disordered stretches follow at residues 310–345 (SPRLEKDVKQTEDEMCSTGTSNSRPPLPSSREVLNS) and 706–732 (ITPLQKTPRQGDAGTPYRTPKSVRRGA). The segment covering 312-321 (RLEKDVKQTE) has biased composition (basic and acidic residues). Phosphothreonine; by CDK1 is present on Thr-743. In terms of domain architecture, AGC-kinase C-terminal spans 838–881 (HGVDWDNLQNQPMPFIPQPDDETDTSYFEARNNAQHLTVSGFSL).

Belongs to the protein kinase superfamily. AGC Ser/Thr protein kinase family. Post-translationally, phosphorylation at Thr-743 by CDK1 during M phase activates its kinase activity. Maximum phosphorylation occurs in prometaphase.

The protein localises to the cytoplasm. It is found in the cytoskeleton. The protein resides in the microtubule organizing center. Its subcellular location is the centrosome. It localises to the nucleus. The catalysed reaction is L-seryl-[protein] + ATP = O-phospho-L-seryl-[protein] + ADP + H(+). The enzyme catalyses L-threonyl-[protein] + ATP = O-phospho-L-threonyl-[protein] + ADP + H(+). In terms of biological role, serine/threonine kinase that plays a key role in M phase by acting as a regulator of mitosis entry and maintenance. Acts by promoting the inactivation of protein phosphatase 2A (PP2A) during M phase: does not directly inhibit PP2A but acts by mediating phosphorylation and subsequent activation of ARPP19 and ENSA at 'Ser-62' and 'Ser-67', respectively. ARPP19 and ENSA are phosphatase inhibitors that specifically inhibit the PPP2R2D (PR55-delta) subunit of PP2A. Inactivation of PP2A during M phase is essential to keep cyclin-B1-CDK1 activity high. Following DNA damage, it is also involved in checkpoint recovery by being inhibited. The sequence is that of Serine/threonine-protein kinase greatwall (MASTL) from Gallus gallus (Chicken).